Consider the following 231-residue polypeptide: Sugar fermentation stimulation protein homolog (231 aa).

Belongs to the SfsA family.

The protein is Sugar fermentation stimulation protein homolog of Geobacter sp. (strain M21).